The sequence spans 461 residues: MSTGKVVQIIGAVVDVEFPQDAVPQVYDALKITEGDLEGLVLEVQQQLGGGVVRTIAMGTSDGLRRGLNVVNTGQGIQVPVGVETLGRIMNVLGEPIDEAGPIGEKDRWSIHREAPAYAEQSMSNELLETGIKVIDLVCPFAKGGKVGLFGGAGVGKTVNMMELIRNIAIEHSGYSVFAGVGERTREGNDFYHEMNDSNVLDKVSLVYGQMNEPPGNRLRVAFTGLTMAEKFRDEGRDVLFFVDNIYRYTLAGTEVSALLGRMPSAVGYQPTLAEEMGVLQERITSTNKGSITSIQAVYVPADDLTDPSPATTFAHLDATVVLSRDIASQGIYPAIDPLDSSSRQLDPLVVGTEHYETARGVQTVLQRYKELKDIIAILGMDELSEEDKQTVSRARKIQRYLSQPFFVAEVFTGSPGKYVSLKDTIAGFKGILAGEYDDMPEQAFYMVGGIEEAIEKANKM.

151–158 serves as a coordination point for ATP; it reads GGAGVGKT.

This sequence belongs to the ATPase alpha/beta chains family. As to quaternary structure, F-type ATPases have 2 components, CF(1) - the catalytic core - and CF(0) - the membrane proton channel. CF(1) has five subunits: alpha(3), beta(3), gamma(1), delta(1), epsilon(1). CF(0) has three main subunits: a(1), b(2) and c(9-12). The alpha and beta chains form an alternating ring which encloses part of the gamma chain. CF(1) is attached to CF(0) by a central stalk formed by the gamma and epsilon chains, while a peripheral stalk is formed by the delta and b chains.

It is found in the cell inner membrane. It catalyses the reaction ATP + H2O + 4 H(+)(in) = ADP + phosphate + 5 H(+)(out). Produces ATP from ADP in the presence of a proton gradient across the membrane. The catalytic sites are hosted primarily by the beta subunits. This Colwellia psychrerythraea (strain 34H / ATCC BAA-681) (Vibrio psychroerythus) protein is ATP synthase subunit beta.